The chain runs to 57 residues: Phospholipase A2 superbin b (57 aa).

Ca(2+) contacts are provided by Y28, G30, and G32. A disulfide bond links C29 and C45. H48 is an active-site residue. D49 is a binding site for Ca(2+).

The cofactor is Ca(2+). In terms of tissue distribution, expressed by the venom gland.

The protein localises to the secreted. The enzyme catalyses a 1,2-diacyl-sn-glycero-3-phosphocholine + H2O = a 1-acyl-sn-glycero-3-phosphocholine + a fatty acid + H(+). Functionally, snake venom phospholipase A2 (PLA2) that inhibits collagen-induced platelet aggregation. In terms of inhibition of platelet aggregation, superbin b is more potent as superbin c, and d. PLA2 catalyzes the calcium-dependent hydrolysis of the 2-acyl groups in 3-sn-phosphoglycerides. The sequence is that of Phospholipase A2 superbin b from Austrelaps superbus (Lowland copperhead snake).